The following is a 513-amino-acid chain: MEEIQRYLQLKRSQQHNFLYPLIFQEYIYAFAHDRIFSRSFLSENTGYENKSSLLIVKRLITRMYQQNPFIIFPNDSTQNQFLGHNKNFYSQLISEGFAFIVEIPFFLRLISSLEGKKKKIVKSQNLRSIHSIFPFLEDSFSHLNFVLDILIPQPVHAEILVQTLRYWVKDASSLHLIRFLLNEYCNWNSLIFPKKASSSFSNSKRNQRNQRLFLFLYNSHVCEYESIFFFLRNQSSHLRSTYSRVLLERIYFYGKIEHLVNVVVKVKDFQANLWLVKEPCMHYVRYQRKSLLASKGTSLFMNKWKCFLVTFWQWHFALWFHPRRIYINQLSKNLLEFLGYLSSVQMNPSVVRSQILENSFLINNAIKKFDTLVPIIPLIASLANTKFCNVLGHPISKPVWADLSDSHIIDRFGRICSNLSHYHSGSSKKKSLYRIKYILRLSCARTLARKHKSTVRAFLKRLGSELLEEFLMSEEDVLFLTFPKASSTLRGVYKSRIWYLDILCISDLVNYK.

The protein belongs to the intron maturase 2 family. MatK subfamily.

It localises to the plastid. The protein resides in the chloroplast. Its function is as follows. Usually encoded in the trnK tRNA gene intron. Probably assists in splicing its own and other chloroplast group II introns. This Keckiella cordifolia (Heart-leafed penstemon) protein is Maturase K.